The following is a 483-amino-acid chain: Siroheme synthase (483 aa).

The interval 1 to 203 (MNYFPIFANL…RQNTLAEREL (203 aa)) is precorrin-2 dehydrogenase /sirohydrochlorin ferrochelatase. Residues 22-23 (AV) and 43-44 (KH) contribute to the NAD(+) site. Ser-128 bears the Phosphoserine mark. Residues 217 to 483 (GSVSLVGAGP…GGLNAGQRAA (267 aa)) are uroporphyrinogen-III C-methyltransferase. Residue Pro-226 participates in S-adenosyl-L-methionine binding. Asp-249 functions as the Proton acceptor in the catalytic mechanism. Lys-271 serves as the catalytic Proton donor. S-adenosyl-L-methionine-binding positions include 302 to 304 (GGD), Val-307, 332 to 333 (TA), Met-384, and Gly-413.

This sequence in the N-terminal section; belongs to the precorrin-2 dehydrogenase / sirohydrochlorin ferrochelatase family. It in the C-terminal section; belongs to the precorrin methyltransferase family.

The catalysed reaction is uroporphyrinogen III + 2 S-adenosyl-L-methionine = precorrin-2 + 2 S-adenosyl-L-homocysteine + H(+). The enzyme catalyses precorrin-2 + NAD(+) = sirohydrochlorin + NADH + 2 H(+). It catalyses the reaction siroheme + 2 H(+) = sirohydrochlorin + Fe(2+). It functions in the pathway cofactor biosynthesis; adenosylcobalamin biosynthesis; precorrin-2 from uroporphyrinogen III: step 1/1. Its pathway is cofactor biosynthesis; adenosylcobalamin biosynthesis; sirohydrochlorin from precorrin-2: step 1/1. The protein operates within porphyrin-containing compound metabolism; siroheme biosynthesis; precorrin-2 from uroporphyrinogen III: step 1/1. It participates in porphyrin-containing compound metabolism; siroheme biosynthesis; siroheme from sirohydrochlorin: step 1/1. It functions in the pathway porphyrin-containing compound metabolism; siroheme biosynthesis; sirohydrochlorin from precorrin-2: step 1/1. Multifunctional enzyme that catalyzes the SAM-dependent methylations of uroporphyrinogen III at position C-2 and C-7 to form precorrin-2 via precorrin-1. Then it catalyzes the NAD-dependent ring dehydrogenation of precorrin-2 to yield sirohydrochlorin. Finally, it catalyzes the ferrochelation of sirohydrochlorin to yield siroheme. This chain is Siroheme synthase, found in Neisseria meningitidis serogroup B (strain ATCC BAA-335 / MC58).